The following is a 75-amino-acid chain: Protein SlyX homolog (75 aa).

Belongs to the SlyX family.

This Chromobacterium violaceum (strain ATCC 12472 / DSM 30191 / JCM 1249 / CCUG 213 / NBRC 12614 / NCIMB 9131 / NCTC 9757 / MK) protein is Protein SlyX homolog.